The sequence spans 859 residues: DNA mismatch repair protein MutS (859 aa).

622-629 (GPNMGGKS) provides a ligand contact to ATP.

Belongs to the DNA mismatch repair MutS family.

Functionally, this protein is involved in the repair of mismatches in DNA. It is possible that it carries out the mismatch recognition step. This protein has a weak ATPase activity. This chain is DNA mismatch repair protein MutS, found in Coxiella burnetii (strain Dugway 5J108-111).